A 473-amino-acid chain; its full sequence is Glutamate--tRNA ligase (473 aa).

The 'HIGH' region signature appears at 13–23 (PSPTGFLHVGG). Residues 240-244 (KLSKR) carry the 'KMSKS' region motif. Lysine 243 serves as a coordination point for ATP.

Belongs to the class-I aminoacyl-tRNA synthetase family. Glutamate--tRNA ligase type 1 subfamily. In terms of assembly, monomer.

It localises to the cytoplasm. It catalyses the reaction tRNA(Glu) + L-glutamate + ATP = L-glutamyl-tRNA(Glu) + AMP + diphosphate. In terms of biological role, catalyzes the attachment of glutamate to tRNA(Glu) in a two-step reaction: glutamate is first activated by ATP to form Glu-AMP and then transferred to the acceptor end of tRNA(Glu). The chain is Glutamate--tRNA ligase from Shewanella denitrificans (strain OS217 / ATCC BAA-1090 / DSM 15013).